The sequence spans 482 residues: Carbamoyl phosphate synthase large chain, N-terminal section (482 aa).

Positions 1-398 are carboxyphosphate synthetic domain; that stretch reads MESIKKVMVF…ALQKAIRSLD (398 aa). ATP-binding residues include Arg126, Arg166, Gly172, Gly173, Glu205, Val207, Glu212, Gly238, Ile239, His240, Gln281, and Glu295. Positions 130–324 constitute an ATP-grasp domain; the sequence is AEAMAEINEP…IARIAAKIAI (195 aa). Gln281, Glu295, and Asn297 together coordinate Mg(2+). Gln281, Glu295, and Asn297 together coordinate Mn(2+).

Belongs to the CarB family. Composed of two chains; the small (or glutamine) chain promotes the hydrolysis of glutamine to ammonia, which is used by the large (or ammonia) chain to synthesize carbamoyl phosphate. Tetramer of heterodimers (alpha,beta)4. Mg(2+) is required as a cofactor. It depends on Mn(2+) as a cofactor.

The enzyme catalyses hydrogencarbonate + L-glutamine + 2 ATP + H2O = carbamoyl phosphate + L-glutamate + 2 ADP + phosphate + 2 H(+). It carries out the reaction hydrogencarbonate + NH4(+) + 2 ATP = carbamoyl phosphate + 2 ADP + phosphate + 2 H(+). It participates in amino-acid biosynthesis; L-arginine biosynthesis; carbamoyl phosphate from bicarbonate: step 1/1. The protein operates within pyrimidine metabolism; UMP biosynthesis via de novo pathway; (S)-dihydroorotate from bicarbonate: step 1/3. Its function is as follows. Large subunit of the glutamine-dependent carbamoyl phosphate synthetase (CPSase). CPSase catalyzes the formation of carbamoyl phosphate from the ammonia moiety of glutamine, carbonate, and phosphate donated by ATP, constituting the first step of 2 biosynthetic pathways, one leading to arginine and/or urea and the other to pyrimidine nucleotides. The large subunit (synthetase) binds the substrates ammonia (free or transferred from glutamine from the small subunit), hydrogencarbonate and ATP and carries out an ATP-coupled ligase reaction, activating hydrogencarbonate by forming carboxy phosphate which reacts with ammonia to form carbamoyl phosphate. This is Carbamoyl phosphate synthase large chain, N-terminal section (carB1) from Methanocaldococcus jannaschii (strain ATCC 43067 / DSM 2661 / JAL-1 / JCM 10045 / NBRC 100440) (Methanococcus jannaschii).